Consider the following 299-residue polypeptide: ATP phosphoribosyltransferase (299 aa).

It belongs to the ATP phosphoribosyltransferase family. Long subfamily. Mg(2+) serves as cofactor.

Its subcellular location is the cytoplasm. The catalysed reaction is 1-(5-phospho-beta-D-ribosyl)-ATP + diphosphate = 5-phospho-alpha-D-ribose 1-diphosphate + ATP. It participates in amino-acid biosynthesis; L-histidine biosynthesis; L-histidine from 5-phospho-alpha-D-ribose 1-diphosphate: step 1/9. Feedback inhibited by histidine. Its function is as follows. Catalyzes the condensation of ATP and 5-phosphoribose 1-diphosphate to form N'-(5'-phosphoribosyl)-ATP (PR-ATP). Has a crucial role in the pathway because the rate of histidine biosynthesis seems to be controlled primarily by regulation of HisG enzymatic activity. The polypeptide is ATP phosphoribosyltransferase (Mannheimia succiniciproducens (strain KCTC 0769BP / MBEL55E)).